The primary structure comprises 120 residues: Succinate dehydrogenase membrane anchor subunit (120 aa).

Residues 1–17 (MTEKLLHFIRTKSGSMH) are Mitochondrial matrix-facing. A helical transmembrane segment spans residues 18–38 (WWLQRFLAILLAPIILYLLFD). The Mitochondrial intermembrane segment spans residues 39–63 (VAIYIGQQSDPTVMMFLNRIFNHNS). A helical membrane pass occupies residues 64–85 (IFIFITSVILIWHVRGGMEVII). Residue His76 coordinates heme. Topologically, residues 86 to 95 (EDYVHGEKTR) are mitochondrial matrix. Residue Tyr88 coordinates a ubiquinone. Residues 96–120 (IVSIFLIRVIAIEIMEYLYKCSIIF) traverse the membrane as a helical segment.

In terms of assembly, part of an enzyme complex containing four subunits: a flavoprotein, an iron-sulfur protein, plus two membrane-anchoring proteins. Heme is required as a cofactor.

It is found in the mitochondrion inner membrane. It participates in carbohydrate metabolism; tricarboxylic acid cycle. In terms of biological role, membrane-anchoring subunit of succinate dehydrogenase (SDH). In Reclinomonas americana, this protein is Succinate dehydrogenase membrane anchor subunit (SDH4).